A 343-amino-acid chain; its full sequence is 3-hydroxy-3-methylglutaryl-CoA lyase, cytoplasmic (343 aa).

G2 is lipidated: N-myristoyl glycine. Positions V48–M315 constitute a Pyruvate carboxyltransferase domain. R56 is a binding site for substrate. Residues D57, H248, and H250 each contribute to the a divalent metal cation site. C281 is an active-site residue. N290 provides a ligand contact to a divalent metal cation.

Belongs to the HMG-CoA lyase family. The cofactor is a divalent metal cation. Present at high level in duodenum and small intestine (at protein level).

The protein resides in the cytoplasm. It is found in the cytosol. The protein localises to the endoplasmic reticulum membrane. It carries out the reaction (3S)-3-hydroxy-3-methylglutaryl-CoA = acetoacetate + acetyl-CoA. The protein operates within metabolic intermediate metabolism; (S)-3-hydroxy-3-methylglutaryl-CoA degradation; acetoacetate from (S)-3-hydroxy-3-methylglutaryl-CoA: step 1/1. In terms of biological role, non-mitochondrial 3-hydroxy-3-methylglutaryl-CoA lyase that catalyzes a cation-dependent cleavage of (S)-3-hydroxy-3-methylglutaryl-CoA into acetyl-CoA and acetoacetate, a key step in ketogenesis, the products of which support energy production in nonhepatic animal tissues. This is 3-hydroxy-3-methylglutaryl-CoA lyase, cytoplasmic (Hmgcll1) from Rattus norvegicus (Rat).